The primary structure comprises 328 residues: Sterol demethylase protein B (328 aa).

This sequence belongs to the NAD(P)-dependent epimerase/dehydratase family.

The catalysed reaction is a 3beta-hydroxy-4alpha-methylsteroid-4beta-carboxylate + NAD(+) = a 4alpha-methyl-3-oxosteroid + CO2 + NADH. The enzyme catalyses a 3beta-hydroxy-4alpha-methylsteroid-4beta-carboxylate + NADP(+) = a 4alpha-methyl-3-oxosteroid + CO2 + NADPH. It catalyses the reaction 4beta-carboxy-4alpha-methyl-5alpha-cholesta-8,24-dien-3beta-ol + NAD(+) = 3-dehydro-4alpha-methylzymosterol + CO2 + NADH. It carries out the reaction 4beta-carboxy-4alpha-methyl-5alpha-cholesta-8,24-dien-3beta-ol + NADP(+) = 3-dehydro-4alpha-methylzymosterol + CO2 + NADPH. The catalysed reaction is 3-dehydro-4alpha-methylzymosterol + NADPH + H(+) = 4alpha-methylzymosterol + NADP(+). It functions in the pathway steroid biosynthesis; sterol biosynthesis. Its function is as follows. Participates in the biosynthesis of bacterial sterols. Together with SdmA, removes one methyl group from the C-4 position of 4,4-dimethylated steroid molecules. SdmB catalyzes an oxidative decarboxylation that results in reduction of the 3beta-hydroxy group at the C-3 carbon to an oxo group. It also functions as a ketoreductase that converts the C-3 oxo group back to a hydroxyl group after C-4 demethylation. This Methylococcus capsulatus (strain ATCC 33009 / NCIMB 11132 / Bath) protein is Sterol demethylase protein B.